The following is a 106-amino-acid chain: YcgL domain-containing protein PsycPRwf_1721 (106 aa).

Residues 1–94 enclose the YcgL domain; that stretch reads MHCDIYKFPK…PSDVLLAQAQ (94 aa).

This Psychrobacter sp. (strain PRwf-1) protein is YcgL domain-containing protein PsycPRwf_1721.